We begin with the raw amino-acid sequence, 386 residues long: ADP,ATP carrier protein, mitochondrial (386 aa).

The N-terminal 76 residues, Ala1–Ala76, are a transit peptide targeting the mitochondrion. 3 Solcar repeats span residues Ala83–Leu176, Lys188–Val281, and Asp289–Ile375. The next 5 helical transmembrane spans lie at Phe85–Leu112, Thr153–Phe177, Tyr186–Leu206, Phe257–Leu278, and Phe292–Ile312. ADP contacts are provided by Arg158 and Lys170. Arg316 lines the ADP pocket. The segment at Arg316–Met321 is important for transport activity. Residues Arg316–Met321 carry the Nucleotide carrier signature motif motif. Residues Ala352–Leu372 form a helical membrane-spanning segment.

The protein belongs to the mitochondrial carrier (TC 2.A.29) family. In terms of assembly, monomer.

It is found in the mitochondrion inner membrane. It carries out the reaction ADP(in) + ATP(out) = ADP(out) + ATP(in). The matrix-open state (m-state) is inhibited by the membrane-permeable bongkrekic acid (BKA). The cytoplasmic-open state (c-state) is inhibited by the membrane-impermeable toxic inhibitor carboxyatractyloside (CATR). ADP:ATP antiporter that mediates import of ADP into the mitochondrial matrix for ATP synthesis, and export of ATP out to fuel the cell. Cycles between the cytoplasmic-open state (c-state) and the matrix-open state (m-state): operates by the alternating access mechanism with a single substrate-binding site intermittently exposed to either the cytosolic (c-state) or matrix (m-state) side of the inner mitochondrial membrane. The chain is ADP,ATP carrier protein, mitochondrial (ANT1) from Solanum tuberosum (Potato).